Reading from the N-terminus, the 328-residue chain is Biotin synthase (328 aa).

The Radical SAM core domain maps to 43-272; it reads NVVQKASLLS…KSTVRLSAGR (230 aa). Residues cysteine 58, cysteine 62, and cysteine 65 each coordinate [4Fe-4S] cluster. Residues cysteine 103, cysteine 135, cysteine 195, and arginine 267 each coordinate [2Fe-2S] cluster.

The protein belongs to the radical SAM superfamily. Biotin synthase family. In terms of assembly, homodimer. [4Fe-4S] cluster serves as cofactor. [2Fe-2S] cluster is required as a cofactor.

The enzyme catalyses (4R,5S)-dethiobiotin + (sulfur carrier)-SH + 2 reduced [2Fe-2S]-[ferredoxin] + 2 S-adenosyl-L-methionine = (sulfur carrier)-H + biotin + 2 5'-deoxyadenosine + 2 L-methionine + 2 oxidized [2Fe-2S]-[ferredoxin]. The protein operates within cofactor biosynthesis; biotin biosynthesis; biotin from 7,8-diaminononanoate: step 2/2. In terms of biological role, catalyzes the conversion of dethiobiotin (DTB) to biotin by the insertion of a sulfur atom into dethiobiotin via a radical-based mechanism. This Allorhizobium ampelinum (strain ATCC BAA-846 / DSM 112012 / S4) (Agrobacterium vitis (strain S4)) protein is Biotin synthase.